The following is a 216-amino-acid chain: MSHPNVLLLGAPGAGKGTQSRRLVDEFGVEHVTTGDALRANKTKDITHLDVEYDTPGAYMDAGELVPDAVVNEIVKTALDDADGYVLDGYPRNESQTEYLDSITDLDVVLYLDVDEDELVGRLTGRRVCEDCGATFHVSFNQPETEGVCDACGGSLYQREDDTEETARERITVYEENTAPVVEYFREQGVLAEVDGERTPDEVWTDVAAAVDERTA.

ATP is bound at residue 13–18; sequence GAGKGT. Residues 33–66 form an NMP region; that stretch reads TTGDALRANKTKDITHLDVEYDTPGAYMDAGELV. AMP is bound by residues T34, R39, 64–66, 89–92, and Q96; these read ELV and GYPR. Residues 125-162 form an LID region; the sequence is GRRVCEDCGATFHVSFNQPETEGVCDACGGSLYQREDD. Residue R126 participates in ATP binding. Residues C129 and C132 each contribute to the Zn(2+) site. 135–136 provides a ligand contact to ATP; the sequence is TF. The Zn(2+) site is built by C149 and C152. Positions 159 and 170 each coordinate AMP. R198 lines the ATP pocket.

The protein belongs to the adenylate kinase family. In terms of assembly, monomer.

The protein resides in the cytoplasm. It catalyses the reaction AMP + ATP = 2 ADP. The protein operates within purine metabolism; AMP biosynthesis via salvage pathway; AMP from ADP: step 1/1. Functionally, catalyzes the reversible transfer of the terminal phosphate group between ATP and AMP. Plays an important role in cellular energy homeostasis and in adenine nucleotide metabolism. This is Adenylate kinase from Halobacterium salinarum (strain ATCC 700922 / JCM 11081 / NRC-1) (Halobacterium halobium).